The chain runs to 370 residues: MASMIALLTWALALLPALASAQTQKGFWDYFSQSSGDKGKAEQVQRQKLAWEPTSLKDSLEQDLSNIDKFLEKLGPLSGQAREPPALPQDPADMRRQLQEELVEVRARLEPYMAEAHEQVGWNLESLRRQLKPYTAELMEQVALRVQELQEQLRVVGEGTKAQLLGGVDEARGLLRELQNLVAHHTGRVQALFHPYAQRLVSGIGRHVQELHRSVAPHAVASPARLSRCVQTLSRKLTLKAKALHARIQQNLDQLREELSAFAGARADGAVEGTSQDPQVLSQEVRQRLQAFRQDTFLQIADFTRAMDQETEEVQLQLAPPPPGHSAFAPEFLQADSGKALSKLQARLEDLWEDINYSLHDHGLGHQEEP.

Residues 1–21 (MASMIALLTWALALLPALASA) form the signal peptide. Ser-59 carries the phosphoserine modification.

The protein belongs to the apolipoprotein A1/A4/E family. In terms of assembly, interacts with GPIHBP1. Interacts with SORL1; this interaction leads to APOA5 internalization and sorting either to lysosomes and degradation, or to the trans-Golgi network.

Its subcellular location is the secreted. It is found in the early endosome. It localises to the late endosome. The protein resides in the golgi apparatus. The protein localises to the trans-Golgi network. Its function is as follows. Minor apolipoprotein mainly associated with HDL and to a lesser extent with VLDL. May also be associated with chylomicrons. Important determinant of plasma triglyceride (TG) levels by both being a potent stimulator of apo-CII lipoprotein lipase (LPL) TG hydrolysis and an inhibitor of the hepatic VLDL-TG production rate (without affecting the VLDL-apoB production rate). Activates poorly lecithin:cholesterol acyltransferase (LCAT) and does not enhance efflux of cholesterol from macrophages. Binds heparin. The chain is Apolipoprotein A-V (APOA5) from Acinonyx jubatus (Cheetah).